The following is a 292-amino-acid chain: GTP cyclohydrolase FolE2 (292 aa).

It belongs to the GTP cyclohydrolase IV family.

It carries out the reaction GTP + H2O = 7,8-dihydroneopterin 3'-triphosphate + formate + H(+). It participates in cofactor biosynthesis; 7,8-dihydroneopterin triphosphate biosynthesis; 7,8-dihydroneopterin triphosphate from GTP: step 1/1. Converts GTP to 7,8-dihydroneopterin triphosphate. This Staphylococcus haemolyticus (strain JCSC1435) protein is GTP cyclohydrolase FolE2.